The chain runs to 438 residues: UDP-N-acetylmuramoylalanine--D-glutamate ligase (438 aa).

112 to 118 (GSNGKST) lines the ATP pocket.

Belongs to the MurCDEF family.

Its subcellular location is the cytoplasm. The catalysed reaction is UDP-N-acetyl-alpha-D-muramoyl-L-alanine + D-glutamate + ATP = UDP-N-acetyl-alpha-D-muramoyl-L-alanyl-D-glutamate + ADP + phosphate + H(+). It functions in the pathway cell wall biogenesis; peptidoglycan biosynthesis. Cell wall formation. Catalyzes the addition of glutamate to the nucleotide precursor UDP-N-acetylmuramoyl-L-alanine (UMA). The protein is UDP-N-acetylmuramoylalanine--D-glutamate ligase of Shigella boydii serotype 4 (strain Sb227).